The sequence spans 548 residues: Probable inorganic phosphate transporter 1-5 (548 aa).

Residues 1–23 lie on the Cytoplasmic side of the membrane; sequence MVQDRKVLDALDTAKTQWYHFTA. Residues 24–44 traverse the membrane as a helical segment; that stretch reads VVIAGMGFFTDAYDLFSISLV. Over 45-69 the chain is Extracellular; the sequence is TKLLGRIYYFNPASKSPGSLPPNVS. A helical membrane pass occupies residues 70–90; the sequence is AAVNGVAFCGTLAGQLFFGWL. At 91 to 98 the chain is on the cytoplasmic side; sequence GDKMGRKK. The chain crosses the membrane as a helical span at residues 99–119; that stretch reads VYGMTLMLMVICCLASGLSFG. Residues 120-123 lie on the Extracellular side of the membrane; sequence SSAK. The chain crosses the membrane as a helical span at residues 124 to 144; sequence GVMATLCFFRFWLGFGIGGDY. Over 145 to 163 the chain is Cytoplasmic; the sequence is PLSATIMSEYANKRTRGAF. A helical membrane pass occupies residues 164 to 184; it reads IAAVFAMQGFGNLTGGIVAII. At 185–210 the chain is on the extracellular side; it reads VSAAFKLRFDAPAYRDDRAGSTVPQA. The helical transmembrane segment at 211-231 threads the bilayer; it reads DYAWRIVLMFGAIPALLTYYW. Residues 232-303 are Cytoplasmic-facing; it reads RMKMPETARY…REFARRHGHH (72 aa). Residues 304–324 traverse the membrane as a helical segment; the sequence is LLGTTVCWFVLDIAYYSQNLF. The Extracellular segment spans residues 325–355; sequence QKDIYTAVQWLPKADTMSALEEMFKISRAQT. The chain crosses the membrane as a helical span at residues 356-376; the sequence is LVALCGTIPGYWFTVLFIDIV. Residues 377 to 378 are Cytoplasmic-facing; that stretch reads GR. The helical transmembrane segment at 379–399 threads the bilayer; that stretch reads FAIQLGGFFLMTAFMLGLAVP. Residues 400–405 are Extracellular-facing; sequence YHHWTT. Residues 406–426 traverse the membrane as a helical segment; it reads PGNHVGFVVMYAFTFFFANFG. Residues 427 to 449 are Cytoplasmic-facing; sequence PNSTTFIVPAEIFPARLRSTCHG. Residues 450–470 traverse the membrane as a helical segment; that stretch reads ISSAAGKMGAIVGSFGFLYAA. At 471–490 the chain is on the extracellular side; the sequence is QSTDPSKTDAGYPRGIGVRN. Residues 491–511 form a helical membrane-spanning segment; it reads SLFLLAGCNVVGFLFTFLVPE. Residues 512–548 lie on the Cytoplasmic side of the membrane; sequence SKGKSLEELSGENEMEAEPAAATNSYRQTVPDSGQSE. Residues 518-548 form a disordered region; that stretch reads EELSGENEMEAEPAAATNSYRQTVPDSGQSE. Residues 533–548 are compositionally biased toward polar residues; the sequence is ATNSYRQTVPDSGQSE.

The protein belongs to the major facilitator superfamily. Phosphate:H(+) symporter (TC 2.A.1.9) family. As to expression, expressed at low levels in roots.

The protein localises to the membrane. Functionally, high-affinity transporter for external inorganic phosphate. This Oryza sativa subsp. japonica (Rice) protein is Probable inorganic phosphate transporter 1-5 (PHT1-5).